An 871-amino-acid polypeptide reads, in one-letter code: MDQHHGARGGAPIRRPRRSIESRSHPFRATGNTQRTYSTPRLSYRDGLSGRTASRDPQEQASNQDESSNPSTSNAQQSTSFWGYLRRVFSDDVPAQPQAPRPRADFAPPAGEESSSEEEEEEGPAQAPLDEEDQLMYADQYSVGDSSDENDEEEDPRLGSDYPTSAESSEYHDHGEMVAGAGAESESETDIDAEEEEEDDEDDEDDMEVIRDESYRLPRTWLDKSIRLMDEALAQSSELSKAITKSTRSLYDSQFAPGGRGYTQTATPSRRLVQLSRAGMYDSDKIVMTGDYMEVDDDPDSAYQSWVRAIRHPLAMNPSWEETISNHTNPSFSTDIDYDIDELIEKNLARTPPVFEGLLDSAEFFYKLPMLYTYATITQDEAYEERLAWSNTQALHGHEQSSWQALLVYYSRGGMYVSPTQEPRGIWRRALKQAMALQLKMCVLGLSDVVTKQNATHHHAAVTFLVDALLRTARNCYLASRLLVFAWERRRETGAKRPAEPLIALSGVTLLQPLPPEVSELLEQRTFDIGLRTPNSAVFRAFFGSLVYWAELRLALRDPASINCRYVGFHLQTSEIYLLARAHSASPGYTKEELVAMEAILTLATLMLEVALQWVHVACAQLLSENDTIKAFRRVSASIPHALAPLGSIRLHDAEFEVLSNPDVMVARDETALSQALFLGYFSVRTALTACMRDYSHEADGGSKETVTGVFLGVGLILQRLAGHLNFLLNCLAGAALYGGQKINIHSLTLPRYSLLADVMAPMLQRQSLVDFWRARDNMLEDLEITPRPGPPTQGKRVVVEMPLPSDDLPDMTPGASVNNGAGLGRMVDMAKQLQHYRETIIGEEATSSVGKRGLIRAGVGVAALRGRRRK.

Positions M1 to D212 are disordered. The Nuclear localization signal signature appears at I13–T33. 2 stretches are compositionally biased toward polar residues: residues T30 to R41 and E59 to F81. Acidic residues-rich tracts occupy residues S114–Q134, S146–D155, and S185–M207.

It belongs to the alphaherpesvirinae HHV-1 UL47 family. In terms of assembly, interacts with US3 kinase. Interacts with UL31 and UL34; these interactions seem important for efficient virion nuclear egress. Interacts with UL41/VHS. Post-translationally, phosphorylated by US3. This phosphorylation is required for proper nuclear localization.

It is found in the virion tegument. The protein localises to the host nucleus. The protein resides in the host cytoplasm. Functionally, tegument protein that can bind to various RNA transcripts. Plays a role in the attenuation of selective viral and cellular mRNA degradation by modulating the activity of host shutoff RNase UL41/VHS. Also plays a role in the primary envelopment of virions in the perinuclear space, probably by interacting with two nuclear egress proteins UL31 and UL34. The chain is Tegument protein UL47 homolog from Equus caballus (Horse).